The sequence spans 205 residues: Auxin-responsive protein IAA8 (205 aa).

A disordered region spans residues 1–48 (MECMASTEESLPASSSMDSCSGELPTTTTTAPAQSTASSGCRPPATAA). Over residues 7–19 (TEESLPASSSMDS) the composition is skewed to polar residues. The span at 25 to 39 (PTTTTTAPAQSTASS) shows a compositional bias: low complexity. The EAR-like (transcriptional repression) signature appears at 58–62 (LRLGL). The tract at residues 71–98 (DGNNPSTPRSSLTTATVTADRGGGGGGH) is disordered. Residues 73-87 (NNPSTPRSSLTTATV) show a composition bias toward polar residues. Positions 103–199 (SLFVKVYMEG…KRLRIARADD (97 aa)) constitute a PB1 domain.

The protein belongs to the Aux/IAA family. As to quaternary structure, homodimers and heterodimers. In terms of tissue distribution, highly expressed in green shoots. Expressed in flowers.

Its subcellular location is the nucleus. Aux/IAA proteins are short-lived transcriptional factors that function as repressors of early auxin response genes at low auxin concentrations. The sequence is that of Auxin-responsive protein IAA8 (IAA8) from Oryza sativa subsp. japonica (Rice).